A 151-amino-acid polypeptide reads, in one-letter code: uncharacterized protein (151 aa).

This is an uncharacterized protein from Methanocaldococcus jannaschii (strain ATCC 43067 / DSM 2661 / JAL-1 / JCM 10045 / NBRC 100440) (Methanococcus jannaschii).